The chain runs to 802 residues: Lon protease (802 aa).

Positions 17 to 211 (SIVMPLFEVV…LFLHILTKHK (195 aa)) constitute a Lon N-terminal domain. 363 to 370 (GPPGTGKT) contacts ATP. One can recognise a Lon proteolytic domain in the interval 600–780 (ENVPGVVTGL…EEVLREALDI (181 aa)). Residues S686 and K729 contribute to the active site.

This sequence belongs to the peptidase S16 family. As to quaternary structure, homohexamer. Organized in a ring with a central cavity.

The protein localises to the cytoplasm. It catalyses the reaction Hydrolysis of proteins in presence of ATP.. Its function is as follows. ATP-dependent serine protease that mediates the selective degradation of mutant and abnormal proteins as well as certain short-lived regulatory proteins. Required for cellular homeostasis and for survival from DNA damage and developmental changes induced by stress. Degrades polypeptides processively to yield small peptide fragments that are 5 to 10 amino acids long. Binds to DNA in a double-stranded, site-specific manner. The sequence is that of Lon protease from Methanosarcina barkeri (strain Fusaro / DSM 804).